The sequence spans 542 residues: MAAKEVRFSSDAREKMLRGVDTLANAVKVTLGPKGRNVVIEKSFGAPRITKDGVTVAKEIELDDKFENMGAQMVREVASKTNDLAGDGTTTATVLAQAIVKEGAKAVAAGMNPMDLKRGIDLAVEAVVKDLTKNAKKITSNSEIAQVATISANGDTEIGRFLAEAMQKVGNEGVITVEEAKSLETELEVVEGMQFDRGYVSPYFVTDAEKMRVEFEDPYVLIHEKKLSGLQAMVPLLESVVQSGKPLLVIAEDVEGEALATLVVNKLRGGLKVAAVKAPGFGDRRKAMLEDIAILTGGTAISEDLGIKLENVTLNMLGRAKKVVIDKENTTIVDGAGRKKDIEARVTQIKAQIEETTSDYDREKLQERLAKLAGGVAVIRVGGATEVEVKERKDRVDDAMHATRAAVEEGILPGGGVALLRALKALDAVKPDNPDQKAGVDIVRRAIQVPARQIIQNAGEDGSLVVGKLLEKNTYNWGFNAATGEYQDLVGVGVIDPAKVVRTALQDAASVASLLITTEALVAEKPKKDVAPALPPGGGMDF.

Residues 30–33, Lys-51, 87–91, Gly-415, 480–482, and Asp-496 contribute to the ATP site; these read TLGP, DGTTT, and NAA.

Belongs to the chaperonin (HSP60) family. Forms a cylinder of 14 subunits composed of two heptameric rings stacked back-to-back. Interacts with the co-chaperonin GroES.

The protein resides in the cytoplasm. The enzyme catalyses ATP + H2O + a folded polypeptide = ADP + phosphate + an unfolded polypeptide.. Functionally, together with its co-chaperonin GroES, plays an essential role in assisting protein folding. The GroEL-GroES system forms a nano-cage that allows encapsulation of the non-native substrate proteins and provides a physical environment optimized to promote and accelerate protein folding. The chain is Chaperonin GroEL 1 from Nitrobacter winogradskyi (strain ATCC 25391 / DSM 10237 / CIP 104748 / NCIMB 11846 / Nb-255).